The chain runs to 140 residues: Ribosome maturation factor RimP (140 aa).

Belongs to the RimP family.

It localises to the cytoplasm. Its function is as follows. Required for maturation of 30S ribosomal subunits. This Campylobacter jejuni subsp. jejuni serotype O:2 (strain ATCC 700819 / NCTC 11168) protein is Ribosome maturation factor RimP.